The primary structure comprises 259 residues: Indole-3-glycerol phosphate synthase (259 aa).

It belongs to the TrpC family.

The enzyme catalyses 1-(2-carboxyphenylamino)-1-deoxy-D-ribulose 5-phosphate + H(+) = (1S,2R)-1-C-(indol-3-yl)glycerol 3-phosphate + CO2 + H2O. Its pathway is amino-acid biosynthesis; L-tryptophan biosynthesis; L-tryptophan from chorismate: step 4/5. This chain is Indole-3-glycerol phosphate synthase, found in Dehalococcoides mccartyi (strain ATCC BAA-2266 / KCTC 15142 / 195) (Dehalococcoides ethenogenes (strain 195)).